Here is a 1325-residue protein sequence, read N- to C-terminus: MREAAERRQQLELEHEQALAVLNAKQQEIELLQKAQVEAKKEHEGAVQLLEAKVRELEEKCRTQSEQFNLLSRELEKFRQQAGKIDLLSSNPLTSSDISGSPSKSLSQLMNGIATSLGKGHESPSGSRCVISEFIRPLQISGDKPEQLSVKPTFLSKSRSDTPRCRFDSDMDNDQNSNTSKQRYSGKVHLCIARYSYNPFDGPNENPEAELPLTAGKYLYVYGDMDEDGFYEGELLDGQRGLVPSNFVDFVQDNETRLSSTLSSEQDQNFINHSGSTLEGDILEISPPSHIDSSVISNGAGTLDVNIDEIGEDIVPYPRKITLIKQLAKSVIVGWEPPVVPPGWGTINSYNVLVDKEVRMNIALGSRTKALIEKLNISTCTYRISIQSITNKGNSDELQCTLLVGKDVVVAPSNLKVDNITQISAELSWLPTNSNYSHVIFLNEEEFDIVKAASYKYHFFNLKPNMAYKVKVMAKPHQMPWQLPLEQREKKEAFVEFSTLPAGPPAPPQDVTVRAGSTQATIQVSWKPPALTATGTSHGANVTGYGVYAKGQRVAEVIFPTAENTLVELMRLRNLEAKEVTVRTLSAQGESVDSSVAAIPSDLLVPPSPHPRTAPKSKPLASAGAPETKEEHLGPHLKIDESWEQTHSASPVHGHTLEPPVPNFPSSLQGRRSPSPNRILPQPQGTPVPNTVAKAMAREAAQRVAESNRMERRSVFSERSNAAQYANSDDEEDGYDSPNVKRRGASVDDFLKGSELGKQPHYCHGEDYHTESSRGSDLSDIMEEDEEELYSEMQLEDGGRRRVSLTSHNALKECNKNKTTDATFLEQPDFSQQIHHSKKLFSIPEVAEEDGEYSELLYKQGLGMPYKKKSTIARDSRPPRPYNQDQQHNFWYPAKHRISGMEDFTADDKGCKYSRSLSRSPDSGLDCGSEEEESRFTFRYTCDSVSANVASSCCADTADCSCRKSMRPLLARRKTLTRQTSIEEDFGDLGSSFVEPRSEQVKSSYEKKYETQKCNRTDNLSNEDIQGGWKNDLKMADSRAAGPLAKSSHRDAEDSLLLGNPSSAGRPERVEHAGRRSSHGSAVPQRSRPMLVPSIDGYGGHDHLSPDIYEESETDPGTEDISTRIFVALFDYDPLTMSPNPDAAEEELPFKEGQIIKVYGDKDADGFYRGETCTRIGLIPCNMVSEIQADDEEMMDQLLKQGFLPLNTPVEKIERNRRSGRQHSVSTRRMVALYDYDPRESSPNVDVEAELTFCTGDIITVFGEIDEDGFYYGELNGQKGLVPSNFLEEVPDDVEVYLSDAPSRYLHDTPMRTKAKRKKSVHFTP.

The disordered stretch occupies residues 153 to 181; it reads TFLSKSRSDTPRCRFDSDMDNDQNSNTSK. Positions 158 to 169 are enriched in basic and acidic residues; that stretch reads SRSDTPRCRFDS. Residues 186–253 enclose the SH3 1 domain; the sequence is GKVHLCIARY…PSNFVDFVQD (68 aa). 3 consecutive Fibronectin type-III domains span residues 315 to 408, 411 to 493, and 507 to 608; these read VPYP…GKDV, APSN…KKEA, and PPQD…VPPS. Disordered stretches follow at residues 601–778, 988–1010, and 1040–1090; these read SDLL…GSDL, DLGS…KKYE, and AAGP…SRPM. A compositionally biased stretch (basic and acidic residues) spans 627–641; sequence ETKEEHLGPHLKIDE. A compositionally biased stretch (polar residues) spans 664 to 676; sequence FPSSLQGRRSPSP. Basic and acidic residues predominate over residues 696–716; that stretch reads MAREAAQRVAESNRMERRSVF. Residues 717 to 727 are compositionally biased toward polar residues; sequence SERSNAAQYAN. Composition is skewed to basic and acidic residues over residues 763-774 and 996-1010; these read CHGEDYHTESSR and PRSE…KKYE. SH3 domains follow at residues 1121–1189 and 1225–1292; these read ISTR…EIQA and VSTR…EVPD.

It belongs to the RIMBP family. Interacts with RIMS1, RIMS2, CACNA1D and CACNA1B, and potentially with other Ca(2+) channel alpha-1 isoforms. In terms of tissue distribution, brain, cochlea and retina.

The protein localises to the cell membrane. It localises to the synapse. Functionally, plays a role in the synaptic transmission as bifunctional linker that interacts simultaneously with RIMS1, RIMS2, CACNA1D and CACNA1B. This chain is RIMS-binding protein 2 (RIMBP2), found in Gallus gallus (Chicken).